A 200-amino-acid chain; its full sequence is Large ribosomal subunit protein uL4 (200 aa).

The tract at residues 42–65 (TRAQKTRSEVSGGGAKPWRQKGTG) is disordered.

The protein belongs to the universal ribosomal protein uL4 family. As to quaternary structure, part of the 50S ribosomal subunit.

In terms of biological role, one of the primary rRNA binding proteins, this protein initially binds near the 5'-end of the 23S rRNA. It is important during the early stages of 50S assembly. It makes multiple contacts with different domains of the 23S rRNA in the assembled 50S subunit and ribosome. Its function is as follows. Forms part of the polypeptide exit tunnel. The chain is Large ribosomal subunit protein uL4 from Aliivibrio fischeri (strain MJ11) (Vibrio fischeri).